The following is a 337-amino-acid chain: Anthranilate phosphoribosyltransferase (337 aa).

5-phospho-alpha-D-ribose 1-diphosphate-binding positions include G82, 85 to 86 (GD), T90, 92 to 95 (NIST), 110 to 118 (KHGGRSVSS), and S122. Position 82 (G82) interacts with anthranilate. S94 provides a ligand contact to Mg(2+). R168 is an anthranilate binding site. Mg(2+)-binding residues include D226 and E227.

The protein belongs to the anthranilate phosphoribosyltransferase family. As to quaternary structure, homodimer. Requires Mg(2+) as cofactor.

It catalyses the reaction N-(5-phospho-beta-D-ribosyl)anthranilate + diphosphate = 5-phospho-alpha-D-ribose 1-diphosphate + anthranilate. It functions in the pathway amino-acid biosynthesis; L-tryptophan biosynthesis; L-tryptophan from chorismate: step 2/5. In terms of biological role, catalyzes the transfer of the phosphoribosyl group of 5-phosphorylribose-1-pyrophosphate (PRPP) to anthranilate to yield N-(5'-phosphoribosyl)-anthranilate (PRA). This Francisella tularensis subsp. tularensis (strain WY96-3418) protein is Anthranilate phosphoribosyltransferase.